Consider the following 339-residue polypeptide: Fructose-1,6-bisphosphatase class 1 (339 aa).

The Mg(2+) site is built by Glu-94, Asp-116, Leu-118, and Asp-119. Substrate is bound by residues 119–122, Asn-210, and Lys-276; that span reads DGSS. Glu-282 is a binding site for Mg(2+).

It belongs to the FBPase class 1 family. As to quaternary structure, homotetramer. Mg(2+) serves as cofactor.

Its subcellular location is the cytoplasm. The enzyme catalyses beta-D-fructose 1,6-bisphosphate + H2O = beta-D-fructose 6-phosphate + phosphate. It functions in the pathway carbohydrate biosynthesis; gluconeogenesis. The sequence is that of Fructose-1,6-bisphosphatase class 1 from Burkholderia ambifaria (strain MC40-6).